The primary structure comprises 71 residues: uncharacterized protein (71 aa).

This is an uncharacterized protein from Dictyostelium discoideum (Social amoeba).